Reading from the N-terminus, the 299-residue chain is Glutamyl-Q tRNA(Asp) synthetase (299 aa).

L-glutamate-binding positions include 9–13 and Glu-45; that span reads RFAPS. The 'HIGH' region motif lies at 12-22; the sequence is PSPTGPLHFGS. The Zn(2+) site is built by Cys-101, Cys-103, and Cys-118. The L-glutamate site is built by Tyr-170 and Arg-188. The 'KMSKS' region signature appears at 226-230; that stretch reads KLSKS. Lys-229 is an ATP binding site.

It belongs to the class-I aminoacyl-tRNA synthetase family. GluQ subfamily. The cofactor is Zn(2+).

Functionally, catalyzes the tRNA-independent activation of glutamate in presence of ATP and the subsequent transfer of glutamate onto a tRNA(Asp). Glutamate is transferred on the 2-amino-5-(4,5-dihydroxy-2-cyclopenten-1-yl) moiety of the queuosine in the wobble position of the QUC anticodon. This Xanthomonas axonopodis pv. citri (strain 306) protein is Glutamyl-Q tRNA(Asp) synthetase.